We begin with the raw amino-acid sequence, 247 residues long: PF03932 family protein CutC (247 aa).

This sequence belongs to the CutC family.

It localises to the cytoplasm. The chain is PF03932 family protein CutC from Vibrio parahaemolyticus serotype O3:K6 (strain RIMD 2210633).